We begin with the raw amino-acid sequence, 847 residues long: uncharacterized protein (847 aa).

This is an uncharacterized protein from Penicillium chrysogenum virus (isolate Caston/2003) (PcV).